Consider the following 236-residue polypeptide: Hydantoin racemase (236 aa).

As to quaternary structure, homohexamer, homoheptamer or homooctamer.

The enzyme catalyses a D-5-monosubstituted hydantoin = a L-5-monosubstituted hydantoin. It carries out the reaction D-5-benzylhydantoin = L-5-benzylhydantoin. With respect to regulation, completely inhibited by HgCl(2) and iodoacetamide. Stimulated by dithiothreitol. In terms of biological role, involved in the asymmetric conversion of racemic 5-substituted hydantoins to the corresponding L-amino acids. Catalyzes the racemization via enolization of D- and L-5-monosubstituted hydantoins. It shows preference for hydantoins with arylalkyl side chains such as 5-benzylhydantoin (BH) and, to a lesser extent, 5-(3-indolylmethylene)hydantoin (IMH). The chain is Hydantoin racemase from Paenarthrobacter aurescens (Arthrobacter aurescens).